Consider the following 140-residue polypeptide: Phosphopantetheine adenylyltransferase (140 aa).

Ser9 contributes to the substrate binding site. ATP-binding positions include 9–10 (SF) and His17. Substrate is bound by residues Lys41, Thr74, and Arg88. ATP is bound by residues 89-91 (GLR), Glu99, and 124-130 (KRSLSST).

The protein belongs to the bacterial CoaD family. Homohexamer. Mg(2+) is required as a cofactor.

The protein localises to the cytoplasm. It catalyses the reaction (R)-4'-phosphopantetheine + ATP + H(+) = 3'-dephospho-CoA + diphosphate. The protein operates within cofactor biosynthesis; coenzyme A biosynthesis; CoA from (R)-pantothenate: step 4/5. Functionally, reversibly transfers an adenylyl group from ATP to 4'-phosphopantetheine, yielding dephospho-CoA (dPCoA) and pyrophosphate. This Mycoplasma mycoides subsp. mycoides SC (strain CCUG 32753 / NCTC 10114 / PG1) protein is Phosphopantetheine adenylyltransferase.